Here is a 431-residue protein sequence, read N- to C-terminus: TDP-daunosamine transferase DnrS (431 aa).

Residues 1–23 form the signal peptide; the sequence is MKVLVTAFAMDAHFNGVVPLAWA.

This sequence belongs to the glycosyltransferase 28 family.

It carries out the reaction dTDP-beta-L-daunosamine + epsilon-rhodomycinone = rhodomycin D + dTDP + H(+). It functions in the pathway antibiotic biosynthesis; daunorubicin biosynthesis. Its pathway is antibiotic biosynthesis; carminomycin biosynthesis. Functionally, involved in the biosynthesis of the anthracyclines carminomycin and daunorubicin (daunomycin) which are aromatic polyketide antibiotics that exhibit high cytotoxicity and are widely applied in the chemotherapy of a variety of cancers. Catalyzes the addition of the TDP activated glycoside, L-daunosamine-TDP (2,3,6-trideoxy-3-aminohexose-TDP) at position C-7 of epsilon-rhodomycinone to yield rhodomycin D. Glycosylation is a prerequisite for biological activity of anthracyclines and requires DnrQ which seems to act as an activator. The sequence is that of TDP-daunosamine transferase DnrS (dnrS) from Streptomyces peucetius.